The following is a 284-amino-acid chain: Bifunctional protein FolD (284 aa).

Residues 165–167 (GRS) and S190 contribute to the NADP(+) site.

The protein belongs to the tetrahydrofolate dehydrogenase/cyclohydrolase family. In terms of assembly, homodimer.

The catalysed reaction is (6R)-5,10-methylene-5,6,7,8-tetrahydrofolate + NADP(+) = (6R)-5,10-methenyltetrahydrofolate + NADPH. It catalyses the reaction (6R)-5,10-methenyltetrahydrofolate + H2O = (6R)-10-formyltetrahydrofolate + H(+). The protein operates within one-carbon metabolism; tetrahydrofolate interconversion. Its function is as follows. Catalyzes the oxidation of 5,10-methylenetetrahydrofolate to 5,10-methenyltetrahydrofolate and then the hydrolysis of 5,10-methenyltetrahydrofolate to 10-formyltetrahydrofolate. This is Bifunctional protein FolD from Streptococcus pyogenes serotype M2 (strain MGAS10270).